We begin with the raw amino-acid sequence, 558 residues long: Cytochrome P450 monooxygenase grgG (558 aa).

Residues 11–31 (PASFIYFPLLILVGHALIFIL) form a helical membrane-spanning segment. C470 provides a ligand contact to heme.

This sequence belongs to the cytochrome P450 family. The cofactor is heme.

The protein localises to the membrane. It participates in secondary metabolite biosynthesis. Its function is as follows. Cytochrome P450 monooxygenase; part of the gene cluster that mediates the biosynthesis of gregatin A, a fungal polyketide featuring an alkylated furanone core. The PKS grgA synthesizes C11 and C4 polyketide chains in the presence and absence of the trans-enoyl reductase grgB, respectively. The polyketide transferase grgF is then responsible for the fusion of the two carbon chains to produce the furanone skeleton of gregatin A. Next, the cytochrome P450 monooxygenase grgG performs the oxidative cyclization to furnish the gregatin scaffold and leads to the formation of desmethylgregatin A. In this transformation, grgG initially abstracts a hydrogen atom from C-8 to generate a substrate radical, from which one electron is transferred to the iron-heme center to yield a carbocationic species. Heterocyclization along with double-bond isomerizations provides desmethylgregatin A with the furanone ring. Alternatively, grgG might provide hydroxylation at the C-8 radical, which is followed by dehydration to give the cyclized desmethylgregatin A. Finally, the O-methyltransferase grgD methylates the carboxyl group of desmethylgregatin A to provide gregatin A. This chain is Cytochrome P450 monooxygenase grgG (grgG), found in Penicillium sp.